A 350-amino-acid chain; its full sequence is MGHLKSLFTILFLIAMSSTVTFAGKIPAIIVFGDSSVDAGNNNYIPTVARSNFEPYGRDFVGGKPTGRFCNGKIATDFMSEALGLKPIIPAYLDPSYNISDFATGVTFASAATGYDNATSDVLSVLPLWKQLEYYKEYQTKLKAYQGKDRGTETIESSLYLISIGTNDFLENYFAFPGRSSQYSVSLYQDFLAGIAKEFVKKLHGLGARKISLGGLPPMGCMPLERATNIGTGGECVGRYNDIAVQFNSKLDKMVEKLSKELPGSNLVFSNPYEPFMRIIKNPSSFGFEVVGAACCATGMFEMGYGCQRNNPFTCTNADKYVFWDSFHPTQKTNHIMANALMNSTFPHFL.

An N-terminal signal peptide occupies residues 1 to 23 (MGHLKSLFTILFLIAMSSTVTFA). Residue Ser-35 is the Nucleophile of the active site. N-linked (GlcNAc...) asparagine glycans are attached at residues Asn-98 and Asn-117. Residues Asp-325 and His-328 contribute to the active site. The N-linked (GlcNAc...) asparagine glycan is linked to Asn-343.

Belongs to the 'GDSL' lipolytic enzyme family.

It is found in the secreted. The chain is GDSL esterase/lipase At2g04570 from Arabidopsis thaliana (Mouse-ear cress).